The sequence spans 123 residues: Small ribosomal subunit protein uS12 (123 aa).

Residue Asp90 is modified to 3-methylthioaspartic acid.

It belongs to the universal ribosomal protein uS12 family. Part of the 30S ribosomal subunit. Contacts proteins S8 and S17. May interact with IF1 in the 30S initiation complex.

In terms of biological role, with S4 and S5 plays an important role in translational accuracy. Interacts with and stabilizes bases of the 16S rRNA that are involved in tRNA selection in the A site and with the mRNA backbone. Located at the interface of the 30S and 50S subunits, it traverses the body of the 30S subunit contacting proteins on the other side and probably holding the rRNA structure together. The combined cluster of proteins S8, S12 and S17 appears to hold together the shoulder and platform of the 30S subunit. This Ehrlichia ruminantium (strain Gardel) protein is Small ribosomal subunit protein uS12.